We begin with the raw amino-acid sequence, 468 residues long: UDP-N-acetylmuramate--L-alanine ligase (468 aa).

Residue 112–118 participates in ATP binding; the sequence is GTHGKTT.

Belongs to the MurCDEF family.

It is found in the cytoplasm. The catalysed reaction is UDP-N-acetyl-alpha-D-muramate + L-alanine + ATP = UDP-N-acetyl-alpha-D-muramoyl-L-alanine + ADP + phosphate + H(+). The protein operates within cell wall biogenesis; peptidoglycan biosynthesis. Cell wall formation. The chain is UDP-N-acetylmuramate--L-alanine ligase from Bordetella petrii (strain ATCC BAA-461 / DSM 12804 / CCUG 43448).